Here is a 273-residue protein sequence, read N- to C-terminus: Undecaprenyl-diphosphatase (273 aa).

9 helical membrane-spanning segments follow: residues 1 to 21 (MEPI…FLPV), 39 to 59 (PALF…LIVF), 63 to 83 (LGMM…GIAP), 92 to 112 (LKLA…GLGL), 118 to 138 (LFFS…LLWL), 165 to 185 (GLAV…GLFL), 195 to 215 (FSFL…AVDL), 225 to 245 (ATVL…KVLI), and 252 to 272 (RFYL…WIGM).

Belongs to the UppP family.

It is found in the cell inner membrane. The enzyme catalyses di-trans,octa-cis-undecaprenyl diphosphate + H2O = di-trans,octa-cis-undecaprenyl phosphate + phosphate + H(+). Its function is as follows. Catalyzes the dephosphorylation of undecaprenyl diphosphate (UPP). Confers resistance to bacitracin. In Desulfosudis oleivorans (strain DSM 6200 / JCM 39069 / Hxd3) (Desulfococcus oleovorans), this protein is Undecaprenyl-diphosphatase.